Here is a 199-residue protein sequence, read N- to C-terminus: Shikimate kinase (199 aa).

An ATP-binding site is contributed by 34 to 39 (GAGKTA). Residue Thr-38 coordinates Mg(2+). Substrate-binding residues include Asp-56, Arg-80, and Gly-102. ATP is bound at residue Arg-140. Residue Arg-159 coordinates substrate.

It belongs to the shikimate kinase family. As to quaternary structure, monomer. It depends on Mg(2+) as a cofactor.

The protein localises to the cytoplasm. It catalyses the reaction shikimate + ATP = 3-phosphoshikimate + ADP + H(+). It functions in the pathway metabolic intermediate biosynthesis; chorismate biosynthesis; chorismate from D-erythrose 4-phosphate and phosphoenolpyruvate: step 5/7. Catalyzes the specific phosphorylation of the 3-hydroxyl group of shikimic acid using ATP as a cosubstrate. The polypeptide is Shikimate kinase (Cereibacter sphaeroides (strain ATCC 17023 / DSM 158 / JCM 6121 / CCUG 31486 / LMG 2827 / NBRC 12203 / NCIMB 8253 / ATH 2.4.1.) (Rhodobacter sphaeroides)).